We begin with the raw amino-acid sequence, 178 residues long: Probable coatomer subunit zeta-B (178 aa).

The protein belongs to the adaptor complexes small subunit family. Oligomeric complex that consists of at least the alpha, beta, beta', gamma, delta, epsilon and zeta subunits.

Its subcellular location is the cytoplasm. It is found in the golgi apparatus membrane. The protein resides in the cytoplasmic vesicle. It localises to the COPI-coated vesicle membrane. Functionally, the coatomer is a cytosolic protein complex that binds to dilysine motifs and reversibly associates with Golgi non-clathrin-coated vesicles, which further mediate biosynthetic protein transport from the ER, via the Golgi up to the trans Golgi network. Coatomer complex is required for budding from Golgi membranes, and is essential for the retrograde Golgi-to-ER transport of dilysine-tagged proteins. The zeta subunit may be involved in regulating the coat assembly and, hence, the rate of biosynthetic protein transport due to its association-dissociation properties with the coatomer complex. This chain is Probable coatomer subunit zeta-B (copZb), found in Dictyostelium discoideum (Social amoeba).